The following is a 285-amino-acid chain: Undecaprenyl-diphosphatase (285 aa).

7 helical membrane-spanning segments follow: residues 12-34 (IVIA…HAVI), 49-69 (IFLP…LVYF), 93-113 (IHIL…GGLL), 120-140 (LFGT…LLLL), 159-179 (LTYA…LPGI), 234-254 (VATI…AFLM), and 263-283 (WALS…FFIL).

It belongs to the UppP family.

It localises to the cell inner membrane. It catalyses the reaction di-trans,octa-cis-undecaprenyl diphosphate + H2O = di-trans,octa-cis-undecaprenyl phosphate + phosphate + H(+). Its function is as follows. Catalyzes the dephosphorylation of undecaprenyl diphosphate (UPP). Confers resistance to bacitracin. In Gluconacetobacter diazotrophicus (strain ATCC 49037 / DSM 5601 / CCUG 37298 / CIP 103539 / LMG 7603 / PAl5), this protein is Undecaprenyl-diphosphatase.